The primary structure comprises 218 residues: Ribose-5-phosphate isomerase A (218 aa).

Substrate is bound by residues 28 to 31 (SGST), 81 to 84 (DGAD), and 94 to 97 (KGKG). The active-site Proton acceptor is Glu-103. A substrate-binding site is contributed by Lys-121.

This sequence belongs to the ribose 5-phosphate isomerase family. In terms of assembly, homodimer.

It carries out the reaction aldehydo-D-ribose 5-phosphate = D-ribulose 5-phosphate. It functions in the pathway carbohydrate degradation; pentose phosphate pathway; D-ribose 5-phosphate from D-ribulose 5-phosphate (non-oxidative stage): step 1/1. Its function is as follows. Catalyzes the reversible conversion of ribose-5-phosphate to ribulose 5-phosphate. This Wigglesworthia glossinidia brevipalpis protein is Ribose-5-phosphate isomerase A.